A 444-amino-acid polypeptide reads, in one-letter code: Ribosomal protein uS12 methylthiotransferase RimO (444 aa).

Residues 3–119 enclose the MTTase N-terminal domain; the sequence is IKIGLVSLGC…IARAVRRVLE (117 aa). C12, C48, C82, C156, C160, and C163 together coordinate [4Fe-4S] cluster. One can recognise a Radical SAM core domain in the interval 142 to 372; that stretch reads ATPPYTAYLK…MMLQQEISLQ (231 aa). Residues 375 to 444 form the TRAM domain; that stretch reads LKRVGEVIEV…EYDLTGETVL (70 aa).

Belongs to the methylthiotransferase family. RimO subfamily. The cofactor is [4Fe-4S] cluster.

Its subcellular location is the cytoplasm. The enzyme catalyses L-aspartate(89)-[ribosomal protein uS12]-hydrogen + (sulfur carrier)-SH + AH2 + 2 S-adenosyl-L-methionine = 3-methylsulfanyl-L-aspartate(89)-[ribosomal protein uS12]-hydrogen + (sulfur carrier)-H + 5'-deoxyadenosine + L-methionine + A + S-adenosyl-L-homocysteine + 2 H(+). Its function is as follows. Catalyzes the methylthiolation of an aspartic acid residue of ribosomal protein uS12. The chain is Ribosomal protein uS12 methylthiotransferase RimO from Pelotomaculum thermopropionicum (strain DSM 13744 / JCM 10971 / SI).